The primary structure comprises 434 residues: MVNVVLGSQWGDEGKGKLVDLLVGKYDIVARAAGGNNAGHTIVVKGVKYDFHMLPSGLVNPNCQNLIGNGVVMHVPSFFAELEQLEAKGLTDARERLFISSRAHLVFDFHQRTDKLREAELSGASTDGKNIGTTGKGIGPTYATKASRSGLRVHHLVNDEPGAWEEFETKYRRLVQTRQQRYGDFEYDADAELARYKKYREELKPFVVDSVVFMHNAIRDNKKILVEGANALMLDIDFGTYPYVTSSNTGIGGVCTGLGLPPRVIDEVYGVVKAYTTRVGEGPFPTEQLNESGEKLQNIGAEFGVTTGRKRRCGWLDLVVLKYSTLINGYTSLNITKLDVLDTFKEIPVGVSYTLRGKKLDLFPEDLNVLGKVDVEYVTLPGWEQDITKITEYEDLPENAKKYLKFIEDFVGVPIEWVGTGPARESMVYKQVSK.

GTP-binding positions include 11-17 and 39-41; these read GDEGKGK and GHT. Residue D12 is the Proton acceptor of the active site. The Mg(2+) site is built by D12 and G39. IMP-binding positions include 12–15, 37–40, T134, R148, N230, T245, and R309; these read DEGK and NAGH. Catalysis depends on H40, which acts as the Proton donor. 305-311 is a substrate binding site; it reads VTTGRKR. GTP is bound by residues R311, 337–339, and 419–421; these read KLD and GTG.

The protein belongs to the adenylosuccinate synthetase family. As to quaternary structure, homodimer. Mg(2+) is required as a cofactor.

The protein resides in the cytoplasm. It catalyses the reaction IMP + L-aspartate + GTP = N(6)-(1,2-dicarboxyethyl)-AMP + GDP + phosphate + 2 H(+). It functions in the pathway purine metabolism; AMP biosynthesis via de novo pathway; AMP from IMP: step 1/2. In terms of biological role, plays an important role in the de novo pathway and in the salvage pathway of purine nucleotide biosynthesis. Catalyzes the first committed step in the biosynthesis of AMP from IMP. The sequence is that of Adenylosuccinate synthetase from Lachancea thermotolerans (strain ATCC 56472 / CBS 6340 / NRRL Y-8284) (Yeast).